We begin with the raw amino-acid sequence, 401 residues long: MTTFGTPLSPHATKVMLLGSGELGKEVLIALQRLGVETIAVDRYENAPGQQVAHHARTITMSDPAQLKALIEQEKPDLVVPEIEAIATGMLEELEAAGTVRVIPTARAARLTMDREGIRRLAAETLALPTSPYVFCDSLEELQTAIDSKIGYPCVVKPVMSSSGKGQSKIALPKDVAPAWDHAMAGGRVSRGRVIVEGFVDFEYEITLLTVRALGADGQVETHFCEPIGHLQVSGDYVESWQPHPMRPAALEKSHEIARAVTDNLSGQGVFGVELFVKGDEVWFSEVSPRPHDTGMVTLCTQWQNEFELHARAILGLPVDTALKSPGASAVIYGGVDAAGIVFDGVADALRVPNTDIRLFGKPESFVKRRMGVALAFDADVDVARTHARLAASKVRPRAAG.

Residues 22 to 23 and Glu-82 each bind N(1)-(5-phospho-beta-D-ribosyl)glycinamide; that span reads EL. ATP contacts are provided by residues Arg-115, Lys-157, 162 to 167, 197 to 200, and Glu-205; these read SSGKGQ and EGFV. Positions 120-315 constitute an ATP-grasp domain; that stretch reads RLAAETLALP…EFELHARAIL (196 aa). Mg(2+) contacts are provided by Glu-274 and Glu-286. N(1)-(5-phospho-beta-D-ribosyl)glycinamide is bound by residues Asp-293, Lys-362, and 369–370; that span reads RR.

It belongs to the PurK/PurT family. Homodimer.

It carries out the reaction N(1)-(5-phospho-beta-D-ribosyl)glycinamide + formate + ATP = N(2)-formyl-N(1)-(5-phospho-beta-D-ribosyl)glycinamide + ADP + phosphate + H(+). The protein operates within purine metabolism; IMP biosynthesis via de novo pathway; N(2)-formyl-N(1)-(5-phospho-D-ribosyl)glycinamide from N(1)-(5-phospho-D-ribosyl)glycinamide (formate route): step 1/1. In terms of biological role, involved in the de novo purine biosynthesis. Catalyzes the transfer of formate to 5-phospho-ribosyl-glycinamide (GAR), producing 5-phospho-ribosyl-N-formylglycinamide (FGAR). Formate is provided by PurU via hydrolysis of 10-formyl-tetrahydrofolate. This chain is Formate-dependent phosphoribosylglycinamide formyltransferase, found in Polaromonas naphthalenivorans (strain CJ2).